The sequence spans 684 residues: RNA helicase NPH-II (684 aa).

The 176-residue stretch at 184–359 folds into the Helicase ATP-binding domain; it reads FRAWAARRPT…EFFPDAEFVH (176 aa). ATP is bound at residue 197–204; the sequence is GGTGVGKT. Residues 308 to 311 carry the DEXH box motif; sequence DEVH. A Helicase C-terminal domain is found at 392–563; the sequence is NVSAALSAHR…DLYVQPSDLE (172 aa).

Belongs to the DEAD box helicase family. DEAH subfamily. In terms of assembly, monomer.

Its subcellular location is the virion. It catalyses the reaction ATP + H2O = ADP + phosphate + H(+). Its function is as follows. NTP-dependent helicase that catalyzes unidirectional unwinding of 3'tailed duplex RNAs and plays an important role during transcription of early mRNAs, presumably by preventing R-loop formation behind the elongating RNA polymerase. Might also play a role in the export of newly synthesized mRNA chains out of the core into the cytoplasm. Required for replication and propagation of viral particles. This is RNA helicase NPH-II (NPH2) from Homo sapiens (Human).